The sequence spans 297 residues: Bifunctional protein FolD (297 aa).

Residues 166–168 (GRS), serine 191, and isoleucine 232 each bind NADP(+).

It belongs to the tetrahydrofolate dehydrogenase/cyclohydrolase family. In terms of assembly, homodimer.

It catalyses the reaction (6R)-5,10-methylene-5,6,7,8-tetrahydrofolate + NADP(+) = (6R)-5,10-methenyltetrahydrofolate + NADPH. The catalysed reaction is (6R)-5,10-methenyltetrahydrofolate + H2O = (6R)-10-formyltetrahydrofolate + H(+). The protein operates within one-carbon metabolism; tetrahydrofolate interconversion. Catalyzes the oxidation of 5,10-methylenetetrahydrofolate to 5,10-methenyltetrahydrofolate and then the hydrolysis of 5,10-methenyltetrahydrofolate to 10-formyltetrahydrofolate. The protein is Bifunctional protein FolD of Phenylobacterium zucineum (strain HLK1).